The following is a 604-amino-acid chain: UvrABC system protein C (604 aa).

In terms of domain architecture, GIY-YIG spans 13 to 92 (ASPGVYLMKD…IKKYHPKYNV (80 aa)). One can recognise a UVR domain in the interval 205–240 (SEIVQDLEKSIEKASKEQKFEQAGMYYRTLKLIQQA).

It belongs to the UvrC family. As to quaternary structure, interacts with UvrB in an incision complex.

Its subcellular location is the cytoplasm. In terms of biological role, the UvrABC repair system catalyzes the recognition and processing of DNA lesions. UvrC both incises the 5' and 3' sides of the lesion. The N-terminal half is responsible for the 3' incision and the C-terminal half is responsible for the 5' incision. The chain is UvrABC system protein C from Chlamydia abortus (strain DSM 27085 / S26/3) (Chlamydophila abortus).